Here is a 304-residue protein sequence, read N- to C-terminus: Glycine--tRNA ligase alpha subunit (304 aa).

The protein belongs to the class-II aminoacyl-tRNA synthetase family. In terms of assembly, tetramer of two alpha and two beta subunits.

Its subcellular location is the cytoplasm. It catalyses the reaction tRNA(Gly) + glycine + ATP = glycyl-tRNA(Gly) + AMP + diphosphate. The protein is Glycine--tRNA ligase alpha subunit of Afipia carboxidovorans (strain ATCC 49405 / DSM 1227 / KCTC 32145 / OM5) (Oligotropha carboxidovorans).